The primary structure comprises 156 residues: 2-C-methyl-D-erythritol 2,4-cyclodiphosphate synthase (156 aa).

Residues D9 and H11 each coordinate a divalent metal cation. 4-CDP-2-C-methyl-D-erythritol 2-phosphate-binding positions include 9 to 11 (DAH) and 35 to 36 (HS). H43 contributes to the a divalent metal cation binding site. 57–59 (DIG) is a binding site for 4-CDP-2-C-methyl-D-erythritol 2-phosphate.

This sequence belongs to the IspF family. As to quaternary structure, homotrimer. Requires a divalent metal cation as cofactor.

It carries out the reaction 4-CDP-2-C-methyl-D-erythritol 2-phosphate = 2-C-methyl-D-erythritol 2,4-cyclic diphosphate + CMP. It participates in isoprenoid biosynthesis; isopentenyl diphosphate biosynthesis via DXP pathway; isopentenyl diphosphate from 1-deoxy-D-xylulose 5-phosphate: step 4/6. Involved in the biosynthesis of isopentenyl diphosphate (IPP) and dimethylallyl diphosphate (DMAPP), two major building blocks of isoprenoid compounds. Catalyzes the conversion of 4-diphosphocytidyl-2-C-methyl-D-erythritol 2-phosphate (CDP-ME2P) to 2-C-methyl-D-erythritol 2,4-cyclodiphosphate (ME-CPP) with a corresponding release of cytidine 5-monophosphate (CMP). The polypeptide is 2-C-methyl-D-erythritol 2,4-cyclodiphosphate synthase (Hydrogenobaculum sp. (strain Y04AAS1)).